The following is a 129-amino-acid chain: Methylmalonyl-CoA decarboxylase subunit gamma (129 aa).

Composition is skewed to low complexity over residues 24–39 and 49–58; these read APAA…APAP and PAAAAAPVPA. The tract at residues 24–58 is disordered; sequence APAAAPKAAPAAAPAPKAAPAPAPAPAAAAAPVPA. In terms of domain architecture, Biotinyl-binding spans 51-129; that stretch reads AAAAPVPAGA…STGDDMVVLG (79 aa). N6-biotinyllysine is present on Lys-95.

The methylmalonyl-CoA decarboxylase is composed of five subunits: the carboxyltransferase alpha subunit (MmdA), the tunnel beta subunit (MmdB), the biotin-containing gamma subunit (MmdC), and the delta (MmdD) and epsilon (MmdE) subunits. The cofactor is biotin.

The protein resides in the cell membrane. The enzyme catalyses (S)-methylmalonyl-CoA + Na(+)(in) + H(+)(out) = propanoyl-CoA + Na(+)(out) + CO2. Completely inhibited by avidin. Biotin-containing subunit of the sodium ion pump methylmalonyl-CoA decarboxylase, which converts the chemical energy of a decarboxylation reaction into an electrochemical gradient of Na(+) ions across the cytoplasmic membrane, thereby creating a sodium ion motive force that is used for ATP synthesis. Can also convert malonyl-CoA into acetyl-CoA. The chain is Methylmalonyl-CoA decarboxylase subunit gamma from Veillonella parvula (Staphylococcus parvulus).